We begin with the raw amino-acid sequence, 150 residues long: Ribosome maturation factor RimP (150 aa).

This sequence belongs to the RimP family.

It localises to the cytoplasm. Functionally, required for maturation of 30S ribosomal subunits. The polypeptide is Ribosome maturation factor RimP (Yersinia pestis bv. Antiqua (strain Antiqua)).